Reading from the N-terminus, the 78-residue chain is Rubredoxin (78 aa).

The Rubredoxin-like domain maps to 23 to 74 (DARLECKICWWEYDPEVGDPVWQIAPGTSFSALPAHWRCPNCDGEAEQFMVL). Positions 28, 31, 61, and 64 each coordinate Fe cation.

The protein belongs to the rubredoxin family. It depends on Fe(3+) as a cofactor.

Its function is as follows. Rubredoxin is a small nonheme, iron protein lacking acid-labile sulfide. Its single Fe, chelated to 4 Cys, functions as an electron acceptor and may also stabilize the conformation of the molecule. Could be involved in hydrogenase-linked redox processes. The chain is Rubredoxin (hoxR) from Cupriavidus necator (strain ATCC 17699 / DSM 428 / KCTC 22496 / NCIMB 10442 / H16 / Stanier 337) (Ralstonia eutropha).